We begin with the raw amino-acid sequence, 665 residues long: E3 ubiquitin-protein ligase cblA (665 aa).

Positions 30-50 (NNNNNINNNNNNNNINSNNNG) are disordered. Positions 109–231 (TSLVNYIHYE…NNENNNNNNN (123 aa)) are 4H. The Cbl-PTB domain occupies 109-400 (TSLVNYIHYE…PDIFKSILSF (292 aa)). An EF-hand-like region spans residues 232-306 (NYNPYELLSN…FKLSVFIKWF (75 aa)). Ca(2+)-binding residues include Asp-287, Thr-289, Asp-291, and Tyr-293. Residues 307 to 400 (GALPVSLGIF…PDIFKSILSF (94 aa)) form an SH2-like region. Disordered stretches follow at residues 437-456 (ENNNNQNNNQNNNNNNINTF) and 467-609 (DSSN…NNNN). Positions 467 to 478 (DSSNSSDTNKSP) are enriched in low complexity. Residues 479–544 (TKSRKSSFKN…NNNNNNNNNN (66 aa)) are a coiled coil. The span at 486-512 (FKNDKDKKEKEKEKGKDKEKEKERVSD) shows a compositional bias: basic and acidic residues. Low complexity-rich tracts occupy residues 530–561 (NNNNNNNNNNNNNNNNNNNNNNNNNNSSNNNN) and 571–609 (TSNGSSGNNNNNNNNNNNNNNNNNNNNSSSTTKRNNNNN). An RING-type zinc finger spans residues 618–653 (CTVCMDNEINTVFLECGHLSCCSLCSVKLKKCPICR).

In terms of processing, ubiquitinated.

It is found in the cytoplasm. Its subcellular location is the nucleus. The enzyme catalyses S-ubiquitinyl-[E2 ubiquitin-conjugating enzyme]-L-cysteine + [acceptor protein]-L-lysine = [E2 ubiquitin-conjugating enzyme]-L-cysteine + N(6)-ubiquitinyl-[acceptor protein]-L-lysine.. It participates in protein modification; protein ubiquitination. In terms of biological role, acts as an E3 ubiquitin-protein ligase, which accepts ubiquitin from specific E2 ubiquitin-conjugating enzymes, and then transfers it to substrates promoting their degradation by the proteasome. Up-regulates STATc tyrosine phosphorylation via an inhibitory effect on ptpC accumulation. Recognizes activated receptor tyrosine kinases, RTKs and terminates signaling. The sequence is that of E3 ubiquitin-protein ligase cblA (cblA-1) from Dictyostelium discoideum (Social amoeba).